Reading from the N-terminus, the 210-residue chain is Ribosomal RNA large subunit methyltransferase E (210 aa).

S-adenosyl-L-methionine contacts are provided by Gly61, Trp63, Asp81, Asp97, and Asp122. Lys162 functions as the Proton acceptor in the catalytic mechanism. A compositionally biased stretch (basic and acidic residues) spans 187-196 (KPEASRKRSP). Positions 187–210 (KPEASRKRSPEVYALGQGKRAHMK) are disordered.

The protein belongs to the class I-like SAM-binding methyltransferase superfamily. RNA methyltransferase RlmE family.

It localises to the cytoplasm. The enzyme catalyses uridine(2552) in 23S rRNA + S-adenosyl-L-methionine = 2'-O-methyluridine(2552) in 23S rRNA + S-adenosyl-L-homocysteine + H(+). In terms of biological role, specifically methylates the uridine in position 2552 of 23S rRNA at the 2'-O position of the ribose in the fully assembled 50S ribosomal subunit. The chain is Ribosomal RNA large subunit methyltransferase E from Stenotrophomonas maltophilia (strain K279a).